Here is a 228-residue protein sequence, read N- to C-terminus: 2,3-bisphosphoglycerate-dependent phosphoglycerate mutase (228 aa).

Substrate contacts are provided by residues 8–15 (RHGQSEWN), 21–22 (TG), R60, 87–90 (ERHY), K98, 114–115 (RR), and 183–184 (GN). The active-site Tele-phosphohistidine intermediate is H9. E87 serves as the catalytic Proton donor/acceptor.

Belongs to the phosphoglycerate mutase family. BPG-dependent PGAM subfamily.

The catalysed reaction is (2R)-2-phosphoglycerate = (2R)-3-phosphoglycerate. The protein operates within carbohydrate degradation; glycolysis; pyruvate from D-glyceraldehyde 3-phosphate: step 3/5. In terms of biological role, catalyzes the interconversion of 2-phosphoglycerate and 3-phosphoglycerate. The polypeptide is 2,3-bisphosphoglycerate-dependent phosphoglycerate mutase (Staphylococcus epidermidis (strain ATCC 12228 / FDA PCI 1200)).